Consider the following 641-residue polypeptide: Serine/threonine-protein kinase pink-1, mitochondrial (641 aa).

The N-terminal 74 residues, 1 to 74, are a transit peptide targeting the mitochondrion; it reads MSMKRFGKAA…TRHGRVFRPF (74 aa). The region spanning 137-483 is the Protein kinase domain; the sequence is YEFGEFLGQG…AANALNLSLF (347 aa). Residues 143–151 and Lys-199 contribute to the ATP site; that span reads LGQGCNAAV. The Proton acceptor role is filled by Asp-338.

It belongs to the protein kinase superfamily. Ser/Thr protein kinase family. Mg(2+) serves as cofactor. In terms of processing, autophosphorylated.

It is found in the mitochondrion. The enzyme catalyses L-seryl-[protein] + ATP = O-phospho-L-seryl-[protein] + ADP + H(+). It carries out the reaction L-threonyl-[protein] + ATP = O-phospho-L-threonyl-[protein] + ADP + H(+). Its function is as follows. Protects against mitochondrial dysfunction during cellular stress, potentially by phosphorylating mitochondrial proteins. Plays a role in mitophagy. This chain is Serine/threonine-protein kinase pink-1, mitochondrial (pink-1), found in Caenorhabditis elegans.